Reading from the N-terminus, the 365-residue chain is Aminomethyltransferase (365 aa).

The protein belongs to the GcvT family. In terms of assembly, the glycine cleavage system is composed of four proteins: P, T, L and H.

The enzyme catalyses N(6)-[(R)-S(8)-aminomethyldihydrolipoyl]-L-lysyl-[protein] + (6S)-5,6,7,8-tetrahydrofolate = N(6)-[(R)-dihydrolipoyl]-L-lysyl-[protein] + (6R)-5,10-methylene-5,6,7,8-tetrahydrofolate + NH4(+). Functionally, the glycine cleavage system catalyzes the degradation of glycine. The polypeptide is Aminomethyltransferase (Yersinia pestis bv. Antiqua (strain Antiqua)).